Here is a 526-residue protein sequence, read N- to C-terminus: Thioredoxin reductase 2, mitochondrial (526 aa).

A mitochondrion-targeting transit peptide spans 1 to 36; sequence MAAIVAALRGSSGRFRPQTRVLTRGTRGAAGAASAA. 43–72 serves as a coordination point for FAD; sequence DLLVIGGGSGGLACAKEAAQLGRKVAVADY. Lys-81 carries the N6-succinyllysine modification. The cysteines at positions 88 and 93 are disulfide-linked. An N6-succinyllysine mark is found at Lys-177 and Lys-331. The active-site Proton acceptor is the His-499. Residues 524-525 constitute a cross-link (cysteinyl-selenocysteine (Cys-Sec)); the sequence is CU. Position 525 (Sec-525) is a non-standard amino acid, selenocysteine.

The protein belongs to the class-I pyridine nucleotide-disulfide oxidoreductase family. As to quaternary structure, homodimer. Requires FAD as cofactor. Expressed in liver, kidney, adrenal gland and heart.

Its subcellular location is the mitochondrion. It carries out the reaction [thioredoxin]-dithiol + NADP(+) = [thioredoxin]-disulfide + NADPH + H(+). Involved in the control of reactive oxygen species levels and the regulation of mitochondrial redox homeostasis. Maintains mitochondrial thioredoxin in a reduced state. May play a role in redox-regulated cell signaling. The protein is Thioredoxin reductase 2, mitochondrial (Txnrd2) of Rattus norvegicus (Rat).